The chain runs to 386 residues: Glycerate dehydrogenase HPR, peroxisomal (386 aa).

NAD(+)-binding positions include 175-176, 271-273, and aspartate 297; these read RI and CSR. Residue arginine 273 is part of the active site. The active site involves glutamate 302. Histidine 320 functions as the Proton donor in the catalytic mechanism. Residue 320 to 323 coordinates NAD(+); sequence HIAS. The short motif at 384–386 is the Microbody targeting signal element; that stretch reads SKL.

Belongs to the D-isomer specific 2-hydroxyacid dehydrogenase family. Present in leaves (at protein level). Mostly expressed in photosynthetic tissues such as leaves, stems, flowers, buds, and, to a lower extent, in siliques and roots.

The protein localises to the peroxisome. The enzyme catalyses (R)-glycerate + NAD(+) = 3-hydroxypyruvate + NADH + H(+). It functions in the pathway photosynthesis; photorespiration; 3-phospho-D-glycerate from glycine: step 3/4. Slightly inhibited by oxalate. Catalyzes the NADH-dependent reduction of hydroxypyruvate into glycerate in the photorespiratory core cycle. Mediates fatty acid beta-oxidation in germinating seeds when malate dehydrogenase is absent. The chain is Glycerate dehydrogenase HPR, peroxisomal (HPR) from Arabidopsis thaliana (Mouse-ear cress).